We begin with the raw amino-acid sequence, 422 residues long: Replication factor C large subunit (422 aa).

63 to 70 (GPPGIGKT) contributes to the ATP binding site.

The protein belongs to the activator 1 small subunits family. RfcL subfamily. In terms of assembly, heteromultimer composed of small subunits (RfcS) and large subunits (RfcL).

Part of the RFC clamp loader complex which loads the PCNA sliding clamp onto DNA. The polypeptide is Replication factor C large subunit (Pyrobaculum neutrophilum (strain DSM 2338 / JCM 9278 / NBRC 100436 / V24Sta) (Thermoproteus neutrophilus)).